The sequence spans 627 residues: 2-oxoacid:ferredoxin oxidoreductase 1, subunit alpha (627 aa).

The YPITP motif motif lies at 253-257 (YPITP). Substrate contacts are provided by T256 and R344.

Heterodimer composed of an alpha and a beta subunit.

It catalyses the reaction a 2-oxocarboxylate + 2 oxidized [2Fe-2S]-[ferredoxin] + CoA = an acyl-CoA + 2 reduced [2Fe-2S]-[ferredoxin] + CO2 + H(+). Inhibited by low concentration of 4-fluoro-7-nitrobenzofurazan (NBD-F). Functionally, catalyzes the coenzyme A-dependent oxidative decarboxylation of different 2-oxoacids such as 2-oxoglutarate, pyruvate and 2-oxobutyrate to form their CoA derivatives. This chain is 2-oxoacid:ferredoxin oxidoreductase 1, subunit alpha, found in Sulfurisphaera tokodaii (strain DSM 16993 / JCM 10545 / NBRC 100140 / 7) (Sulfolobus tokodaii).